A 338-amino-acid chain; its full sequence is MRVYYDKDCDLSLIQAKNVTIVGYGSQGHAHAHNLKESGVDVTVALRPGSSSVAKAEAAGFKVASVPDACKTADVLMLLAPDENQKAIYEQDIAPNLKQGATLAFAHGFNIHYNQVTPRADLDVIMIAPKAPGHTVRSEFVRGAGVPDLIAVQQDATGQAKELALSYAAGVGGGRSGIIETTFKDETETDLFGEQAVLCGGAVELVKAGFETLTEAGYEPEMAYFECLHELKLIVDLMYEGGIANMNYSISNNAEYGEYVTGPEVINEQSREAMRNALKRIQNGEYAKMFISEGNSNYPSMHARRRLNAEHPVEQVGEKLRGMMPWIAANQLVDKSKN.

The 181-residue stretch at 1 to 181 (MRVYYDKDCD…GGGRSGIIET (181 aa)) folds into the KARI N-terminal Rossmann domain. NADP(+) contacts are provided by residues 24–27 (YGSQ), arginine 47, serine 50, serine 52, and 82–85 (DENQ). Residue histidine 107 is part of the active site. Residue glycine 133 participates in NADP(+) binding. One can recognise a KARI C-terminal knotted domain in the interval 182-327 (TFKDETETDL…EKLRGMMPWI (146 aa)). Residues aspartate 190, glutamate 194, glutamate 226, and glutamate 230 each coordinate Mg(2+). Substrate is bound at residue serine 251.

This sequence belongs to the ketol-acid reductoisomerase family. The cofactor is Mg(2+).

The enzyme catalyses (2R)-2,3-dihydroxy-3-methylbutanoate + NADP(+) = (2S)-2-acetolactate + NADPH + H(+). The catalysed reaction is (2R,3R)-2,3-dihydroxy-3-methylpentanoate + NADP(+) = (S)-2-ethyl-2-hydroxy-3-oxobutanoate + NADPH + H(+). It participates in amino-acid biosynthesis; L-isoleucine biosynthesis; L-isoleucine from 2-oxobutanoate: step 2/4. Its pathway is amino-acid biosynthesis; L-valine biosynthesis; L-valine from pyruvate: step 2/4. Functionally, involved in the biosynthesis of branched-chain amino acids (BCAA). Catalyzes an alkyl-migration followed by a ketol-acid reduction of (S)-2-acetolactate (S2AL) to yield (R)-2,3-dihydroxy-isovalerate. In the isomerase reaction, S2AL is rearranged via a Mg-dependent methyl migration to produce 3-hydroxy-3-methyl-2-ketobutyrate (HMKB). In the reductase reaction, this 2-ketoacid undergoes a metal-dependent reduction by NADPH to yield (R)-2,3-dihydroxy-isovalerate. The polypeptide is Ketol-acid reductoisomerase (NADP(+)) (Chromohalobacter salexigens (strain ATCC BAA-138 / DSM 3043 / CIP 106854 / NCIMB 13768 / 1H11)).